We begin with the raw amino-acid sequence, 784 residues long: Repetin (784 aa).

An S-100-like region spans residues 1–91; sequence MAQLLNSILS…VQACYHKLDN (91 aa). EF-hand domains are found at residues 13–48 and 49–84; these read DVFHKYAKGNGDCALLCKEELKQLLLAEFGDILQRP and NDPETVETILNLLDQDRDGHIDFHEYLLLVFQLVQA. Residues Glu-32, Asp-62, Asp-64, Asp-66, His-68, and Glu-73 each coordinate Ca(2+). Disordered stretches follow at residues 92–221, 282–584, 601–661, and 677–784; these read KSHG…QAKW, GCGQ…SHYI, TEGT…HQHK, and RDWQ…NHQR. A compositionally biased stretch (basic and acidic residues) spans 124–201; it reads RHEEERQNSH…FSFDQSERQS (78 aa). 7 stretches are compositionally biased toward polar residues: residues 286 to 296, 304 to 343, 356 to 392, 400 to 486, 504 to 584, 610 to 646, and 680 to 695; these read TDRQGQSSHYG, SYHYGQTDRQGQSSHYSQTDRQGQSSHYSQPDRQGQSSHY, DQTNRQGQGSHYSQPNRQGQSSHYGQPDTQDQSSHYG, SSHY…QSSH, GQGQ…SHYI, VEQSGRSGRLSQQTPGQEGYQNQGQGFQSRDSQQNGH, and QSCSSEQGHRQAQTRQ. 2 stretches are compositionally biased toward basic and acidic residues: residues 704-722 and 729-784; these read WAEEEQGHQTWDRHSHESQ and QDRR…NHQR.

Belongs to the S100-fused protein family. In terms of processing, potential substrate of transglutaminase. Some arginines are probably converted to citrullines by peptidylarginine deimidase. Expression is scattered in the normal epidermis but strong in the acrosyringium, the inner hair root sheath and in the filiform papilli of the tongue.

It localises to the secreted. Its subcellular location is the extracellular space. The protein localises to the extracellular matrix. Functionally, involved in the cornified cell envelope formation. Multifunctional epidermal matrix protein. Reversibly binds calcium. The polypeptide is Repetin (RPTN) (Homo sapiens (Human)).